We begin with the raw amino-acid sequence, 213 residues long: MRRGSGDAAVADAIERSKTTAARNIPQLPDLPLPEDTANLRLGPDLNNELLAVLPLVGVWRGEGEGHDPDTGDYPFGQQIIVSHNGGNYLKWESQTWVLDADGEYVRPDLHETGFWRISGDGIPGSTNEEVVELLLAHSSGIVELFYGQALTQSSWELATDVVIRSTSGVLVGGAKRLYGIVEGGDLAYVEERIIADGELRPHLSARLSRYVG.

The GXWXGXG signature appears at 58-64 (GVWRGEG). Heme b-binding residues include Lys176 and His203.

The protein belongs to the nitrobindin family. As to quaternary structure, homodimer. Heme b serves as cofactor.

The enzyme catalyses peroxynitrite = nitrate. Its pathway is nitrogen metabolism. In terms of biological role, heme-binding protein able to scavenge peroxynitrite and to protect free L-tyrosine against peroxynitrite-mediated nitration, by acting as a peroxynitrite isomerase that converts peroxynitrite to nitrate. Therefore, this protein likely plays a role in peroxynitrite sensing and in the detoxification of reactive nitrogen and oxygen species (RNS and ROS, respectively). Is able to bind nitric oxide (NO) in vitro, but may act as a sensor of peroxynitrite levels in vivo. The chain is Peroxynitrite isomerase 2 from Rhodococcus jostii (strain RHA1).